The following is a 249-amino-acid chain: MRAAVVYKTDGHVKRIEEALKRLEVEVELFNQPSEELENFDFIVSVGGDGTILRILQKLKRCPPIFGINTGRVGLLTHASPENFEVELKKAVEKFEVERFPRVSCSAMPDVLALNEIAVLSRKPAKMIDVALRVDGVEVDRIRCDGFIVATQIGSTGYAFSAGGPVVEPYLECFILIPIAPFRFGWKPYVVSMERKIEVIAEKAIVVADGQKSVDFDGEITIEKSEFPAVFFKNEKRFRNLFGKVRSIG.

Asp-49 functions as the Proton acceptor in the catalytic mechanism. NAD(+)-binding positions include 49–50 (DG), Arg-54, 115–116 (NE), Lys-126, Arg-143, Asp-145, Ile-153, 156–161 (TGYAFS), Ala-180, and Gln-211.

This sequence belongs to the NAD kinase family. As to quaternary structure, homotetramer. Requires a divalent metal cation as cofactor.

Its subcellular location is the cytoplasm. The catalysed reaction is NAD(+) + ATP = ADP + NADP(+) + H(+). Its function is as follows. Involved in the regulation of the intracellular balance between NAD(H) and NADP(H), and is a key enzyme in the biosynthesis of NADP. Catalyzes specifically the phosphorylation on 2'-hydroxyl of the adenosine moiety of NAD to yield NADP. In Archaeoglobus fulgidus (strain ATCC 49558 / DSM 4304 / JCM 9628 / NBRC 100126 / VC-16), this protein is NAD kinase.